A 1486-amino-acid polypeptide reads, in one-letter code: Chromosome partition protein MukB (1486 aa).

Residue 34–41 (GGNGAGKS) coordinates ATP. Coiled coils occupy residues 326-418 (LEAD…QYNQ), 444-480 (LETF…QAYQ), and 509-603 (RHLA…RAPV). Positions 666 to 783 (PGGSEDQRLN…EVPLFGRAAR (118 aa)) are flexible hinge. Coiled-coil stretches lie at residues 835 to 923 (EAEI…AKLE), 977 to 1115 (EMLS…TAKA), and 1209 to 1266 (VEAI…QNVS).

It belongs to the SMC family. MukB subfamily. Homodimerization via its hinge domain. Binds to DNA via its C-terminal region. Interacts, and probably forms a ternary complex, with MukE and MukF via its C-terminal region. The complex formation is stimulated by calcium or magnesium. Interacts with tubulin-related protein FtsZ.

It is found in the cytoplasm. The protein resides in the nucleoid. In terms of biological role, plays a central role in chromosome condensation, segregation and cell cycle progression. Functions as a homodimer, which is essential for chromosome partition. Involved in negative DNA supercoiling in vivo, and by this means organize and compact chromosomes. May achieve or facilitate chromosome segregation by condensation DNA from both sides of a centrally located replisome during cell division. The sequence is that of Chromosome partition protein MukB from Escherichia coli (strain 55989 / EAEC).